A 253-amino-acid polypeptide reads, in one-letter code: MSTTTTTTNQPITAESMLRLFPDIDTSSAPLSGHDEEQIRLMDEVCIVLDEDDKPIGTASKKICHLMTNIDKGLLHRAFSVFLFNDKNELLLQQRATEKITFPDMWTNTCCSHPLHIPTETGSTLEDSIAGVKRAAQRKLEHELGIKKEQVPFEDFHFLTRIHYKAPSDGMWGEHEIDYILFIKANVDLDINKNEVRDTQYVTPESLKQQFDDPSLVFTPWFKLICNSMLFEWWQNLDSGLDKYLNEQEIRRM.

Position 61 (Lys-61) interacts with substrate. His-65 and His-76 together coordinate Mg(2+). The 151-residue stretch at 74-224 folds into the Nudix hydrolase domain; it reads LLHRAFSVFL…SLVFTPWFKL (151 aa). Residues Gln-94 and Lys-99 each contribute to the substrate site. Cys-111 is an active-site residue. Ser-112 provides a ligand contact to substrate. The Nudix box signature appears at 112-145; the sequence is SHPLHIPTETGSTLEDSIAGVKRAAQRKLEHELG. 2 residues coordinate Mg(2+): Glu-174 and Glu-176. Residue Glu-176 is part of the active site.

The protein belongs to the IPP isomerase type 1 family. Mg(2+) is required as a cofactor.

It catalyses the reaction isopentenyl diphosphate = dimethylallyl diphosphate. It participates in isoprenoid biosynthesis; dimethylallyl diphosphate biosynthesis; dimethylallyl diphosphate from isopentenyl diphosphate: step 1/1. In terms of biological role, isopentenyl-diphosphate delta-isomerase; part of the second module of ergosterol biosynthesis pathway that includes the middle steps of the pathway. IDI1 catalyzes the 1,3-allylic rearrangement of isopentenyl (IPP) to its highly electrophilic allylic isomer, dimethylallyl diphosphate (DMAPP). The second module is carried out in the vacuole and involves the formation of farnesyl diphosphate, which is also an important intermediate in the biosynthesis of ubiquinone, dolichol, heme and prenylated proteins. Activity by the mevalonate kinase ERG12 (FG05912) first converts mevalonate into 5-phosphomevalonate. 5-phosphomevalonate is then further converted to 5-diphosphomevalonate by the phosphomevalonate kinase ERG8 (FG09764). The diphosphomevalonate decarboxylase ERG19 (FG10424) then produces isopentenyl diphosphate. The isopentenyl-diphosphate delta-isomerase IDI1 (FG09722) then catalyzes the 1,3-allylic rearrangement of the homoallylic substrate isopentenyl (IPP) to its highly electrophilic allylic isomer, dimethylallyl diphosphate (DMAPP). Finally the farnesyl diphosphate synthase ERG20 (FG06784) catalyzes the sequential condensation of isopentenyl pyrophosphate with dimethylallyl pyrophosphate, and then with the resultant geranylpyrophosphate to the ultimate product farnesyl pyrophosphate. The chain is Isopentenyl-diphosphate delta-isomerase IDI1 from Gibberella zeae (strain ATCC MYA-4620 / CBS 123657 / FGSC 9075 / NRRL 31084 / PH-1) (Wheat head blight fungus).